The following is a 636-amino-acid chain: p-hydroxybenzoate-m-hydroxylase (636 aa).

FAD is bound by residues 11 to 40 (DIVI…HIDN), 242 to 244 (RLY), Tyr290, and Asp311. A helical transmembrane segment spans residues 12-33 (IVIVGAGPVGILLSLCMSRWGY). N-linked (GlcNAc...) asparagine glycosylation is present at Asn573.

This sequence belongs to the PheA/TfdB FAD monooxygenase family. It depends on FAD as a cofactor.

Its subcellular location is the membrane. The enzyme catalyses 4-hydroxybenzoate + NADH + O2 + H(+) = 3,4-dihydroxybenzoate + NAD(+) + H2O. It carries out the reaction 4-hydroxybenzoate + NADPH + O2 + H(+) = 3,4-dihydroxybenzoate + NADP(+) + H2O. FAD-dependent monooxygenase; part of the benzoic acid degradation pathway also known as the protocatechuic acid pathway. Benzoic acid debradation begins with the conversion of benzoic acid into 4-hydroxybenzoic acid through hydroxylation by the benzoate-4-monooxygenase bphA, and its partner NADPH-cytochrome P450 reductase cprA which act as a mediator in electron donation from NADPH. 4-Hydroxybenzoic acid is then converted into 3,4-dihydroxybenzoic acid (also called protocatechuic acid) by the p-hydroxybenzoate-m-hydroxylase phhA. Protocatechuic acid is converted into 3-carboxy-cis,cis-muconic acid by the intradiol ring-cleavage dioxygenase prcA, which is further metabolized through the 3-oxoadipate pathway to finally enter the tricarboxylic acid cycle (TCA). This chain is p-hydroxybenzoate-m-hydroxylase, found in Emericella nidulans (strain FGSC A4 / ATCC 38163 / CBS 112.46 / NRRL 194 / M139) (Aspergillus nidulans).